A 333-amino-acid chain; its full sequence is Ketol-acid reductoisomerase (NADP(+)) (333 aa).

The KARI N-terminal Rossmann domain maps to 2–182 (AELFYDADAD…GGTRAGVIKT (181 aa)). Residues 25–28 (YGSQ), Ser51, Ser53, and 83–86 (DPIQ) each bind NADP(+). His108 is an active-site residue. Gly134 is a binding site for NADP(+). The 146-residue stretch at 183–328 (TFTEETETDL…KELRKLMSWV (146 aa)) folds into the KARI C-terminal knotted domain. Residues Asp191, Glu195, Glu227, and Glu231 each coordinate Mg(2+). Ser252 serves as a coordination point for substrate.

The protein belongs to the ketol-acid reductoisomerase family. It depends on Mg(2+) as a cofactor.

It catalyses the reaction (2R)-2,3-dihydroxy-3-methylbutanoate + NADP(+) = (2S)-2-acetolactate + NADPH + H(+). It carries out the reaction (2R,3R)-2,3-dihydroxy-3-methylpentanoate + NADP(+) = (S)-2-ethyl-2-hydroxy-3-oxobutanoate + NADPH + H(+). It functions in the pathway amino-acid biosynthesis; L-isoleucine biosynthesis; L-isoleucine from 2-oxobutanoate: step 2/4. Its pathway is amino-acid biosynthesis; L-valine biosynthesis; L-valine from pyruvate: step 2/4. Its function is as follows. Involved in the biosynthesis of branched-chain amino acids (BCAA). Catalyzes an alkyl-migration followed by a ketol-acid reduction of (S)-2-acetolactate (S2AL) to yield (R)-2,3-dihydroxy-isovalerate. In the isomerase reaction, S2AL is rearranged via a Mg-dependent methyl migration to produce 3-hydroxy-3-methyl-2-ketobutyrate (HMKB). In the reductase reaction, this 2-ketoacid undergoes a metal-dependent reduction by NADPH to yield (R)-2,3-dihydroxy-isovalerate. The protein is Ketol-acid reductoisomerase (NADP(+)) of Streptomyces avermitilis (strain ATCC 31267 / DSM 46492 / JCM 5070 / NBRC 14893 / NCIMB 12804 / NRRL 8165 / MA-4680).